The chain runs to 436 residues: Nucleolar protein 4-like (436 aa).

Residues 1 to 184 (MSDSTWMSAD…KMNDSEGMDP (184 aa)) form a disordered region. Over residues 41–61 (SESGSGNGSSTLNPSTSSSTQ) the composition is skewed to low complexity. At serine 130 the chain carries Phosphoserine. Over residues 160–169 (ADDDDDDHDD) the composition is skewed to acidic residues. Positions 170–184 (HEDNDKMNDSEGMDP) are enriched in basic and acidic residues. Residue serine 295 is modified to Phosphoserine. Polar residues predominate over residues 351–366 (QPPASLQTGNHSNGPT). The disordered stretch occupies residues 351-400 (QPPASLQTGNHSNGPTDLSMKGGASTTSTTPTPTPSSTSTSRPVPTAQLS). Residues 375-396 (STTSTTPTPTPSSTSTSRPVPT) are compositionally biased toward low complexity.

This Homo sapiens (Human) protein is Nucleolar protein 4-like (NOL4L).